A 285-amino-acid polypeptide reads, in one-letter code: Heterogeneous nuclear ribonucleoprotein A/B (285 aa).

The disordered stretch occupies residues 1 to 65 (MSDAAEEQPM…NQNGAEGDQI (65 aa)). The span at 25–43 (EGEAPVEPSAAAAAPAASA) shows a compositional bias: low complexity. 2 consecutive RRM domains span residues 75–158 (GKMF…KDPV) and 159–238 (KKIF…QPKE). Phosphoserine is present on S87. Residues K136 and K208 each participate in a glycyl lysine isopeptide (Lys-Gly) (interchain with G-Cter in SUMO2) cross-link. At K220 the chain carries N6-acetyllysine. Residues 239–285 (VYQQQQYGSGGRGNRNRGNRGSGGGQGSTNYGKSQRRGGHQNNYKPY) form a disordered region. Phosphoserine is present on S247. R250 is subject to Dimethylated arginine; alternate. R250 is subject to Omega-N-methylarginine; alternate. R255 and R258 each carry omega-N-methylarginine. K271 is subject to N6-acetyllysine. R275 bears the Dimethylated arginine; alternate mark. Residue R275 is modified to Omega-N-methylarginine; alternate. Residue R275 is modified to Asymmetric dimethylarginine; alternate.

As to quaternary structure, identified in a IGF2BP1-dependent mRNP granule complex containing untranslated mRNAs. Interacts with APOBEC1. In terms of tissue distribution, ubiquitous.

It localises to the nucleus. Its subcellular location is the cytoplasm. In terms of biological role, transcriptional repressor. Binds to CArG box motifs, single-stranded and double-stranded DNA, and RNA. It may be that repression by CBF-A is a result of competitive binding of CBF, a putative positive factor, and CBF-A to the same or overlapping motifs around the CArG boxes. This chain is Heterogeneous nuclear ribonucleoprotein A/B (Hnrnpab), found in Mus musculus (Mouse).